The sequence spans 181 residues: Adenine phosphoribosyltransferase (181 aa).

This sequence belongs to the purine/pyrimidine phosphoribosyltransferase family. As to quaternary structure, homodimer.

Its subcellular location is the cytoplasm. It carries out the reaction AMP + diphosphate = 5-phospho-alpha-D-ribose 1-diphosphate + adenine. It participates in purine metabolism; AMP biosynthesis via salvage pathway; AMP from adenine: step 1/1. Catalyzes a salvage reaction resulting in the formation of AMP, that is energically less costly than de novo synthesis. This is Adenine phosphoribosyltransferase from Aeromonas salmonicida (strain A449).